The following is a 340-amino-acid chain: 3-hydroxybenzoate synthase (340 aa).

Substrate-binding residues include Tyr-147, Arg-154, Tyr-207, and Arg-220. Glu-334 (proton acceptor) is an active-site residue.

Belongs to the FkbO/Hyg5 family. As to quaternary structure, trimer.

The enzyme catalyses chorismate = 3-hydroxybenzoate + pyruvate. Its function is as follows. Involved in the biosynthesis of BC325, a rapamycin analog containing a 3-hydroxybenzoate starter unit. Catalyzes the hydrolysis of chorismate via an intramolecular mechanism to yield 3-hydroxybenzoate (3HBA). This is 3-hydroxybenzoate synthase from Streptomyces hygroscopicus.